The sequence spans 1011 residues: DNA-directed RNA polymerase subunit beta'' (1011 aa).

Residues Cys-216, Cys-282, Cys-288, and Cys-291 each coordinate Zn(2+).

It belongs to the RNA polymerase beta' chain family. RpoC2 subfamily. In terms of assembly, in plastids the minimal PEP RNA polymerase catalytic core is composed of four subunits: alpha, beta, beta', and beta''. When a (nuclear-encoded) sigma factor is associated with the core the holoenzyme is formed, which can initiate transcription. Requires Zn(2+) as cofactor.

It is found in the plastid. The protein localises to the chloroplast. The catalysed reaction is RNA(n) + a ribonucleoside 5'-triphosphate = RNA(n+1) + diphosphate. Its function is as follows. DNA-dependent RNA polymerase catalyzes the transcription of DNA into RNA using the four ribonucleoside triphosphates as substrates. The polypeptide is DNA-directed RNA polymerase subunit beta'' (Ostreococcus tauri).